Here is a 502-residue protein sequence, read N- to C-terminus: Probable RNA exonuclease C9B6.11c (502 aa).

Positions 338–379 (SELEEKNASTKTENDSNEDDKEECQSSSTSSVPESTASTPKK) are disordered. Residues 341-351 (EEKNASTKTEN) are compositionally biased toward basic and acidic residues. The segment covering 363–376 (SSSTSSVPESTAST) has biased composition (low complexity).

This sequence belongs to the CCR4/nocturin family.

The protein resides in the cytoplasm. Its subcellular location is the nucleus. This is Probable RNA exonuclease C9B6.11c from Schizosaccharomyces pombe (strain 972 / ATCC 24843) (Fission yeast).